Here is a 718-residue protein sequence, read N- to C-terminus: ATP-dependent RNA helicase homolog DQX1 (718 aa).

In terms of domain architecture, Helicase ATP-binding spans 54-222 (HLESSPTGVV…WGNSPIVRVP (169 aa)). Position 67–74 (67–74 (GDPGSGKS)) interacts with ATP. A DEAQ box motif is present at residues 167–170 (DEAQ). Positions 245 to 447 (ACQAVLELCQ…ALMRALEDLD (203 aa)) constitute a Helicase C-terminal domain. The segment at 690 to 718 (QLREGTAEPPAAATETSSPQEYGDGCVLQ) is disordered. Residues 696–708 (AEPPAAATETSSP) show a composition bias toward low complexity.

Ubiquitous.

It localises to the nucleus. Its function is as follows. Might be involved in RNA metabolism; it is missing helicase motif III and may not have helicase activity. The sequence is that of ATP-dependent RNA helicase homolog DQX1 (Dqx1) from Mus musculus (Mouse).